The sequence spans 716 residues: MMYIRQRKETKPIEVSEDFPSPKEDVKLEKKLPSGCASGRFWKILSSAVGGTVALCIGLLTSVYLATLHENDLWFSNIKEVEREISFRTECGLYYSYYKQMLQAPTLLQGFHGLIYDNKTESMRTINLLQRMNIYQEVFLSVLYRVLPIQKYLEPVYFYIYTLFGLQAVYVTALYITSWLLSGTWLSGLLAALWYVTNRIDTTRVEFTIPLRENWALPFFAIQIAAITYFLRPNLQPLSERLTLLAIFVSTFLFSLTWQFNQFMMLLQALVLFILDSLDMLPAMKATWLYGIQISCLLLVCTLQFFNSMILGSLLISFNLSVLIVRKLQKNLKTGSFLTRIWKLLLHLLLVFCLTLFLNNIIKKVLNLKSDEHIFKFLKAKFGFGATRDFDANLYLCEEAFGLLPLNTFQRLSETLLFYAYMFVLVVTVVTASVVAFHNLSDSTSLKSMDQTRKRAVDLKPEAAYNLIHTILFGVLALSTMRMKYLWTSHMCVFASFGLCSSEVWELLLRLVHLCNPKRIWVLRYLVPVLTLLYLCYKSWPGVMDELSELKEFYDPDTVELMTWINSNTPRKAVFAGSMQLLAGVKLCTGRTLTNHPHYEDKSLRERTQAVYQIYAKRSPEEVHALLRSFGTDFVILEDSICYERRHHRGCRLRDLLDVANGHEMDGPGESDPDLRPADHPRFCEEIKRNLPSYAAHFTRVFQNKTFHVYKLSRNK.

Topologically, residues 1-43 (MMYIRQRKETKPIEVSEDFPSPKEDVKLEKKLPSGCASGRFWK) are cytoplasmic. A helical membrane pass occupies residues 44-64 (ILSSAVGGTVALCIGLLTSVY). Residues 65–154 (LATLHENDLW…RVLPIQKYLE (90 aa)) lie on the Lumenal side of the membrane. An N-linked (GlcNAc...) asparagine glycan is attached at N118. A helical membrane pass occupies residues 155-182 (PVYFYIYTLFGLQAVYVTALYITSWLLS). At 183–184 (GT) the chain is on the cytoplasmic side. Positions 185-197 (WLSGLLAALWYVT) form an intramembrane region, name=3. Residues 198 to 215 (NRIDTTRVEFTIPLRENW) are Cytoplasmic-facing. Residues 216 to 230 (ALPFFAIQIAAITYF) constitute an intramembrane region (name=4). The Cytoplasmic segment spans residues 231–239 (LRPNLQPLS). A helical transmembrane segment spans residues 240 to 256 (ERLTLLAIFVSTFLFSL). Residues 257–262 (TWQFNQ) are Lumenal-facing. The chain crosses the membrane as a helical span at residues 263–279 (FMMLLQALVLFILDSLD). Topologically, residues 280 to 289 (MLPAMKATWL) are cytoplasmic. Residues 290 to 306 (YGIQISCLLLVCTLQFF) form a helical membrane-spanning segment. The Lumenal portion of the chain corresponds to 307–308 (NS). The helical transmembrane segment at 309–323 (MILGSLLISFNLSVL) threads the bilayer. Residues 324-338 (IVRKLQKNLKTGSFL) are Cytoplasmic-facing. A helical transmembrane segment spans residues 339-359 (TRIWKLLLHLLLVFCLTLFLN). The Lumenal portion of the chain corresponds to 360 to 414 (NIIKKVLNLKSDEHIFKFLKAKFGFGATRDFDANLYLCEEAFGLLPLNTFQRLSE). Residues 415–437 (TLLFYAYMFVLVVTVVTASVVAF) traverse the membrane as a helical segment. At 438-465 (HNLSDSTSLKSMDQTRKRAVDLKPEAAY) the chain is on the cytoplasmic side. A helical transmembrane segment spans residues 466–485 (NLIHTILFGVLALSTMRMKY). Residues 486 to 487 (LW) are Lumenal-facing. A helical transmembrane segment spans residues 488-499 (TSHMCVFASFGL). Residues 500–522 (CSSEVWELLLRLVHLCNPKRIWV) are Cytoplasmic-facing. Residues 523 to 539 (LRYLVPVLTLLYLCYKS) traverse the membrane as a helical segment. The Lumenal segment spans residues 540-716 (WPGVMDELSE…FHVYKLSRNK (177 aa)). N-linked (GlcNAc...) asparagine glycosylation occurs at N704.

It belongs to the dpy-19 family.

It is found in the endoplasmic reticulum membrane. The catalysed reaction is L-tryptophyl-[protein] + a di-trans,poly-cis-dolichyl beta-D-mannosyl phosphate = C-alpha-D-mannosyl-L-tryptophyl-[protein] + a di-trans,poly-cis-dolichyl phosphate + H(+). Its pathway is protein modification; protein glycosylation. C-mannosyltransferase that mediates C-mannosylation of tryptophan residues on target proteins. The reaction occurs on the luminal side of the endoplasmic reticulum and involves the transfer of a mannose unit from a dolichylphosphate mannose (Dol-P-Man) donor to an acceptor protein containing a WxxW or WxxC consensus sequence. C-mannosylates RSPO1, a Wnt signaling regulator, preferentially at the first Trp residue in the sequence WxxW. C-mannosylates the netrin receptor UNC5A, preferentially at the third tryptophan of WxxWxxWxxC sequence. The polypeptide is Protein C-mannosyl-transferase DPY19L3 (Dpy19l3) (Mus musculus (Mouse)).